The sequence spans 624 residues: Matrilin-4 (624 aa).

A signal peptide spans 1–21; the sequence is MRGPCCWPLSLLLLFLQSWET. The region spanning 36-215 is the VWFA 1 domain; the sequence is DLVFMIDSSR…EFGLQFQGRL (180 aa). An N-linked (GlcNAc...) asparagine glycan is attached at Asn-71. EGF-like domains lie at 217-257, 258-298, 299-339, and 340-380; these read GKDL…KNCL, ALDL…RSCR, AIDY…RSCR, and VRDF…KSCD. 12 disulfides stabilise this stretch: Cys-221–Cys-232, Cys-228–Cys-241, Cys-243–Cys-256, Cys-262–Cys-273, Cys-269–Cys-282, Cys-284–Cys-297, Cys-303–Cys-314, Cys-310–Cys-323, Cys-325–Cys-338, Cys-344–Cys-355, Cys-351–Cys-364, and Cys-366–Cys-379. Asn-307 is a glycosylation site (N-linked (GlcNAc...) asparagine). The VWFA 2 domain maps to 388–563; it reads DLVLLVDGSK…STMTHLLENL (176 aa). A coiled-coil region spans residues 590–623; the sequence is EFQGRTLGALESLTQNLARLTERLEELENQLASR.

Interacts with COMP. As to expression, lung, brain, sternum, kidney and heart.

Its subcellular location is the secreted. Functionally, major component of the extracellular matrix of cartilage. In Mus musculus (Mouse), this protein is Matrilin-4 (Matn4).